A 983-amino-acid chain; its full sequence is Polyhomeotic-like protein 3 (983 aa).

7 disordered regions span residues 1-34 (MDTE…MQQP), 103-149 (LSSG…SSTS), 225-283 (VLSS…TAVT), 313-332 (LHSP…QQQQ), 339-410 (LQNS…SQSP), 477-509 (PGQQ…STSP), and 601-620 (DECV…PAAI). 2 stretches are compositionally biased toward low complexity: residues 9–29 (TSSV…TSSS) and 103–126 (LSSG…SQTS). The span at 127–139 (INLSTSPTPAQLI) shows a compositional bias: polar residues. The span at 140 to 149 (SRSQASSSTS) shows a compositional bias: low complexity. Positions 225–257 (VLSSSQNGPPKSTSQTQSLTICHNKTTVTSSKI) are enriched in polar residues. Over residues 258 to 271 (SQRDPSPESNKKGE) the composition is skewed to basic and acidic residues. Residues S263 and S272 each carry the phosphoserine modification. Residues 274 to 283 (SLESRSTAVT) show a composition bias toward polar residues. Position 315 is a phosphoserine (S315). Over residues 365 to 383 (SNAQSQHCSPIQSHPSPLT) the composition is skewed to polar residues. Low complexity predominate over residues 384–398 (VSPNQSQSAQQSVVV). Positions 477-489 (PGQQIVSPSHQQY) are enriched in polar residues. Over residues 490–506 (SSLQSSPIPIASPPQMS) the composition is skewed to low complexity. 2 positions are modified to phosphothreonine: T609 and T614. Phosphoserine is present on S616. Glycyl lysine isopeptide (Lys-Gly) (interchain with G-Cter in SUMO2) cross-links involve residues K691 and K732. The HD1 signature appears at 691–720 (KPPQAIVKPQILTHVIEGFVIQEGLEPFPV). S761 and S762 each carry phosphoserine. Residues 776-810 (EEMDSELLKCEFCGKMGYANEFLRSKRFCTMSCAK) form an FCS-type zinc finger. The Zn(2+) site is built by C785, C788, C804, and C808. K810 is covalently cross-linked (Glycyl lysine isopeptide (Lys-Gly) (interchain with G-Cter in SUMO2)). Disordered stretches follow at residues 827–847 (RKPD…PDGA) and 864–889 (EEDL…SERE). The SAM domain occupies 919 to 983 (WTVDDVWAFI…CARINSLKES (65 aa)).

In terms of assembly, component of a PRC1-like complex.

It is found in the nucleus. Functionally, component of a Polycomb group (PcG) multiprotein PRC1-like complex, a complex class required to maintain the transcriptionally repressive state of many genes, including Hox genes, throughout development. PcG PRC1 complex acts via chromatin remodeling and modification of histones; it mediates monoubiquitination of histone H2A 'Lys-119', rendering chromatin heritably changed in its expressibility. This Homo sapiens (Human) protein is Polyhomeotic-like protein 3 (PHC3).